Consider the following 216-residue polypeptide: Transmembrane emp24 domain-containing protein eca (216 aa).

The signal sequence occupies residues 1–20 (MRDQFICLALLLCALHSACG). The Lumenal portion of the chain corresponds to 21-182 (LYFHISETER…FRHTSESTNS (162 aa)). The GOLD domain maps to 30 to 126 (RKCFIEEVPD…QLRVHLDIQV (97 aa)). The stretch at 134–164 (ANVAQKEKLTELQLRIRQLLDQVEQITKEQN) forms a coiled coil. A helical membrane pass occupies residues 183-203 (RVLWWSLAQTLVLVCMGFWQM). Topologically, residues 204 to 216 (RHLKSFFEAKKLV) are cytoplasmic. The short motif at 213-216 (KKLV) is the Prevents secretion from ER element.

Belongs to the EMP24/GP25L family.

The protein resides in the endoplasmic reticulum membrane. Functionally, eca and bai are essential, though not redundant, for dorsoventral patterning of the embryo. Specifically required during early embryogenesis for the activity of maternal tkv, while the zygotic tkv is not affected. Involved in Golgi organization. The protein is Transmembrane emp24 domain-containing protein eca of Drosophila pseudoobscura pseudoobscura (Fruit fly).